We begin with the raw amino-acid sequence, 277 residues long: Phosphoribosylaminoimidazole-succinocarboxamide synthase (277 aa).

The protein belongs to the SAICAR synthetase family.

It carries out the reaction 5-amino-1-(5-phospho-D-ribosyl)imidazole-4-carboxylate + L-aspartate + ATP = (2S)-2-[5-amino-1-(5-phospho-beta-D-ribosyl)imidazole-4-carboxamido]succinate + ADP + phosphate + 2 H(+). The protein operates within purine metabolism; IMP biosynthesis via de novo pathway; 5-amino-1-(5-phospho-D-ribosyl)imidazole-4-carboxamide from 5-amino-1-(5-phospho-D-ribosyl)imidazole-4-carboxylate: step 1/2. The chain is Phosphoribosylaminoimidazole-succinocarboxamide synthase from Salinispora tropica (strain ATCC BAA-916 / DSM 44818 / JCM 13857 / NBRC 105044 / CNB-440).